Here is a 625-residue protein sequence, read N- to C-terminus: Alpha-1,3-galactosidase A (625 aa).

The signal sequence occupies residues 1 to 32; sequence MAHGCSGGAMSRFVFLGVALALLGGATSPAAA. PbH1 repeat units follow at residues 342-364, 460-482, 483-505, 516-537, and 573-611; these read KGKV…NIHG, TPSV…LVTT, RKPV…YVSA, VADL…IFVE, and VGGF…RIAR.

The protein belongs to the glycosyl hydrolase 110 family. A subfamily.

It catalyses the reaction Hydrolysis of terminal, non-reducing branched (1-&gt;3)-alpha-D-galactosidic residues, producing free D-galactose.. The catalysed reaction is Hydrolysis of terminal, non-reducing alpha-D-galactose residues in alpha-D-galactosides, including galactose oligosaccharides, galactomannans and galactolipids.. Its function is as follows. Alpha-galactosidase that specifically removes branched alpha-1,3-linked galactose residues present in blood group B antigens. Has no activity toward linear alpha-1,3-linked galactose residues. The sequence is that of Alpha-1,3-galactosidase A (glaA) from Streptomyces avermitilis (strain ATCC 31267 / DSM 46492 / JCM 5070 / NBRC 14893 / NCIMB 12804 / NRRL 8165 / MA-4680).